Here is a 211-residue protein sequence, read N- to C-terminus: MADCVIRDWQGKEAGKATLDLKVAKETTANDLMHRAVLRQQAHARQGTASTLTRSEVRGGGRKPYKQKGTGRARQGSIRTPLRPGGGIVFGPKPRTYNLAMNRKERRLALRTALMARVEDVTVVKDFGTSLEAPKTKEITDALGRLGIAADAKVLIVLTEPSDVVRRSVRNLEKVKLIAANQLNVFDLLHANALVLGEDALATIQEVYGDD.

The segment at 41–87 (QAHARQGTASTLTRSEVRGGGRKPYKQKGTGRARQGSIRTPLRPGGG) is disordered. Basic residues predominate over residues 60–71 (GGRKPYKQKGTG).

This sequence belongs to the universal ribosomal protein uL4 family. As to quaternary structure, part of the 50S ribosomal subunit.

Functionally, one of the primary rRNA binding proteins, this protein initially binds near the 5'-end of the 23S rRNA. It is important during the early stages of 50S assembly. It makes multiple contacts with different domains of the 23S rRNA in the assembled 50S subunit and ribosome. Forms part of the polypeptide exit tunnel. This Parasynechococcus marenigrum (strain WH8102) protein is Large ribosomal subunit protein uL4.